Reading from the N-terminus, the 186-residue chain is Peptidyl-tRNA hydrolase (186 aa).

Tyr-14 is a binding site for tRNA. The active-site Proton acceptor is the His-19. Residues Phe-64, Asn-66, and Asn-112 each coordinate tRNA.

The protein belongs to the PTH family. Monomer.

Its subcellular location is the cytoplasm. It carries out the reaction an N-acyl-L-alpha-aminoacyl-tRNA + H2O = an N-acyl-L-amino acid + a tRNA + H(+). In terms of biological role, hydrolyzes ribosome-free peptidyl-tRNAs (with 1 or more amino acids incorporated), which drop off the ribosome during protein synthesis, or as a result of ribosome stalling. Catalyzes the release of premature peptidyl moieties from peptidyl-tRNA molecules trapped in stalled 50S ribosomal subunits, and thus maintains levels of free tRNAs and 50S ribosomes. The polypeptide is Peptidyl-tRNA hydrolase (Listeria monocytogenes serotype 4a (strain HCC23)).